A 1164-amino-acid polypeptide reads, in one-letter code: Integrin alpha-5 (1164 aa).

The segment covering 1–14 has biased composition (basic and acidic residues); the sequence is MREEGGGSREKEGE. The tract at residues 1-119 is disordered; the sequence is MREEGGGSRE…MGSRTPGSPL (119 aa). Over residues 81 to 90 the composition is skewed to low complexity; sequence LLPALSHSPL. The FG-GAP 1 repeat unit spans residues 156–221; it reads NLDAEAPAVL…CPWGTSPAQC (66 aa). The N-linked (GlcNAc...) asparagine glycan is linked to asparagine 197. Cysteine 212 and cysteine 221 form a disulfide bridge. Phosphoserine is present on serine 240. FG-GAP repeat units follow at residues 241–301, 306–358, 372–424, 425–490, 491–550, and 554–617; these read SEGE…QILE, RSDF…AESY, QTRQ…GSDI, RSLY…GMEP, TPTL…GLAS, and QVLL…IFPA. A disulfide bond links cysteine 269 and cysteine 289. A glycan (N-linked (GlcNAc...) asparagine) is linked at asparagine 295. Cysteine 305 and cysteine 318 are joined by a disulfide. A protein-binding residues include glutamine 375 and aspartate 382. 4 residues coordinate Ca(2+): glutamate 393, serine 395, aspartate 397, and aspartate 401. Asparagine 410, asparagine 420, and asparagine 429 each carry an N-linked (GlcNAc...) asparagine glycan. 15 residues coordinate Ca(2+): aspartate 447, asparagine 449, aspartate 451, leucine 453, aspartate 455, aspartate 514, aspartate 516, aspartate 518, tyrosine 520, aspartate 522, aspartate 578, aspartate 580, asparagine 582, tyrosine 584, and aspartate 586. A disulfide bridge links cysteine 626 with cysteine 635. N-linked (GlcNAc...) asparagine glycans are attached at residues asparagine 637, asparagine 643, asparagine 706, and asparagine 722. A disulfide bridge connects residues cysteine 641 and cysteine 697. The cysteines at positions 758 and 764 are disulfide-linked. 5 N-linked (GlcNAc...) asparagine glycosylation sites follow: asparagine 788, asparagine 825, asparagine 837, asparagine 886, and asparagine 982. Cysteine 831 and cysteine 844 are oxidised to a cystine. 3 disulfide bridges follow: cysteine 962–cysteine 1072, cysteine 983–cysteine 1036, and cysteine 1026–cysteine 1031. The disordered stretch occupies residues 983–1022; that stretch reads CTTSHPPNPEGLELDPEGSQHHRLQRRDVPGRSPASSGPQ. Residues 1114-1134 traverse the membrane as a helical segment; it reads LWIIILAILIGLLLLGLLIYI. At 1135 to 1164 the chain is on the cytoplasmic side; sequence LYKLGFFKRSLPYGTAMEKAQLKPPATSDA. An interaction with HPS5 region spans residues 1136–1143; sequence YKLGFFKR. The GFFKR motif signature appears at 1139 to 1143; it reads GFFKR.

Belongs to the integrin alpha chain family. Heterodimer of an alpha and a beta subunit. The alpha subunit is composed of a heavy and a light chain linked by a disulfide bond. Alpha-5 associates with beta-1. Interacts with NISCH. Interacts with HPS5. Interacts with RAB21 and COMP. Interacts with CIB1. ITGA5:ITGB1 interacts with CCN3. ITGA5:ITGB1 interacts with FBN1. ITGA5:ITGB1 interacts with IL1B. ITGA5:ITGB1 interacts with ACE2. ITGA5:ITGB1 interacts with SELP. Interacts with ANGPT2. ITGA5:ITGB1 interacts with IGFBP2. ITGA5:ITGB1 interacts with IGFBP1. In terms of processing, proteolytic cleavage by PCSK5 mediates activation of the precursor.

It is found in the cell membrane. Its subcellular location is the cell junction. The protein resides in the focal adhesion. Integrin alpha-5/beta-1 (ITGA5:ITGB1) is a receptor for fibronectin and fibrinogen. It recognizes the sequence R-G-D in its ligands. ITGA5:ITGB1 binds to PLA2G2A via a site (site 2) which is distinct from the classical ligand-binding site (site 1) and this induces integrin conformational changes and enhanced ligand binding to site 1. ITGA5:ITGB1 acts as a receptor for fibrillin-1 (FBN1) and mediates R-G-D-dependent cell adhesion to FBN1. ITGA5:ITGB1 acts as a receptor for fibronectin (FN1) and mediates R-G-D-dependent cell adhesion to FN1. ITGA5:ITGB1 is a receptor for IL1B and binding is essential for IL1B signaling. ITGA5:ITGB3 is a receptor for soluble CD40LG and is required for CD40/CD40LG signaling. In Bos taurus (Bovine), this protein is Integrin alpha-5 (ITGA5).